Here is a 298-residue protein sequence, read N- to C-terminus: Lipoyl synthase (298 aa).

[4Fe-4S] cluster contacts are provided by cysteine 40, cysteine 45, cysteine 51, cysteine 67, cysteine 71, cysteine 74, and serine 280. Residues 53–269 (AVRKTATFMI…KEIALSKGFS (217 aa)) form the Radical SAM core domain.

The protein belongs to the radical SAM superfamily. Lipoyl synthase family. Requires [4Fe-4S] cluster as cofactor.

It is found in the cytoplasm. It catalyses the reaction [[Fe-S] cluster scaffold protein carrying a second [4Fe-4S](2+) cluster] + N(6)-octanoyl-L-lysyl-[protein] + 2 oxidized [2Fe-2S]-[ferredoxin] + 2 S-adenosyl-L-methionine + 4 H(+) = [[Fe-S] cluster scaffold protein] + N(6)-[(R)-dihydrolipoyl]-L-lysyl-[protein] + 4 Fe(3+) + 2 hydrogen sulfide + 2 5'-deoxyadenosine + 2 L-methionine + 2 reduced [2Fe-2S]-[ferredoxin]. The protein operates within protein modification; protein lipoylation via endogenous pathway; protein N(6)-(lipoyl)lysine from octanoyl-[acyl-carrier-protein]. Functionally, catalyzes the radical-mediated insertion of two sulfur atoms into the C-6 and C-8 positions of the octanoyl moiety bound to the lipoyl domains of lipoate-dependent enzymes, thereby converting the octanoylated domains into lipoylated derivatives. This Bacillus cytotoxicus (strain DSM 22905 / CIP 110041 / 391-98 / NVH 391-98) protein is Lipoyl synthase.